The chain runs to 416 residues: Transcription factor LATE FLOWERING (416 aa).

Low complexity-rich tracts occupy residues 176 to 186 and 200 to 212; these read STTTTTTALPP and TSPTTKTTTTSET. Disordered stretches follow at residues 176-226 and 276-311; these read STTT…AGGS and LGGPASASDPSSRPPPPPQRPRRKNVRISSDPQTVA. The interval 303–316 is basic motif; degenerate; the sequence is ISSDPQTVAARLRR. In terms of domain architecture, bHLH spans 303–352; it reads ISSDPQTVAARLRRERVSERLRVLQRLVPGGSKMDTATMLDEAASYLKFL. The tract at residues 317-352 is helix-loop-helix motif; the sequence is ERVSERLRVLQRLVPGGSKMDTATMLDEAASYLKFL.

Belongs to the bHLH protein family. In terms of assembly, interacts with PIL13 and PIL15.

The protein resides in the nucleus. Its function is as follows. Transcription factor involved in the negative regulation of flowering. May be involved in the repression of the flowering factor GI and HD1 by interacting with PIL13 and PIL15 and competing with PRR1. Possesses transactivation activity in yeast. This Oryza sativa subsp. japonica (Rice) protein is Transcription factor LATE FLOWERING.